Reading from the N-terminus, the 500-residue chain is Glycerol kinase (500 aa).

Thr-13 provides a ligand contact to ADP. Residues Thr-13, Thr-14, and Ser-15 each contribute to the ATP site. A sn-glycerol 3-phosphate-binding site is contributed by Thr-13. Position 17 (Arg-17) interacts with ADP. Sn-glycerol 3-phosphate-binding residues include Arg-83, Glu-84, Tyr-136, and Asp-246. Positions 83, 84, 136, 246, and 247 each coordinate glycerol. The ADP site is built by Thr-268 and Gly-311. Residues Thr-268, Gly-311, Gln-315, and Gly-412 each coordinate ATP. Positions 412 and 416 each coordinate ADP.

The protein belongs to the FGGY kinase family.

The enzyme catalyses glycerol + ATP = sn-glycerol 3-phosphate + ADP + H(+). The protein operates within polyol metabolism; glycerol degradation via glycerol kinase pathway; sn-glycerol 3-phosphate from glycerol: step 1/1. With respect to regulation, inhibited by fructose 1,6-bisphosphate (FBP). Its function is as follows. Key enzyme in the regulation of glycerol uptake and metabolism. Catalyzes the phosphorylation of glycerol to yield sn-glycerol 3-phosphate. This is Glycerol kinase from Francisella tularensis subsp. novicida (strain U112).